A 643-amino-acid polypeptide reads, in one-letter code: Chromosomal replication initiator protein DnaA (643 aa).

Positions 1–97 are domain I, interacts with DnaA modulators; that stretch reads MADVPADLAA…VDDSAGEPPP (97 aa). A disordered region spans residues 87-303; it reads TVDDSAGEPP…ASGPGEPTAR (217 aa). The segment at 97–302 is domain II; it reads PAAPPAQQTP…PASGPGEPTA (206 aa). The segment covering 195-209 has biased composition (polar residues); that stretch reads SPSSQDAYGSPSQDY. Positions 222 to 269 are enriched in basic and acidic residues; that stretch reads QRGDYDTPRAEYEPARPDYDSARPDYESARPEYDQRDPVRRELPEPPA. A compositionally biased stretch (low complexity) spans 291–300; sequence PAPASGPGEP. Positions 303–519 are domain III, AAA+ region; sequence RLNPKYLFDT…GALIRVTAFA (217 aa). G347, G349, K350, and T351 together coordinate ATP. Residues 520–643 form a domain IV, binds dsDNA region; that stretch reads SLNRQPVDLG…TELTNRIKNG (124 aa).

The protein belongs to the DnaA family. Oligomerizes as a right-handed, spiral filament on DNA at oriC.

The protein resides in the cytoplasm. In terms of biological role, plays an essential role in the initiation and regulation of chromosomal replication. ATP-DnaA binds to the origin of replication (oriC) to initiate formation of the DNA replication initiation complex once per cell cycle. Binds the DnaA box (a 9 base pair repeat at the origin) and separates the double-stranded (ds)DNA. Forms a right-handed helical filament on oriC DNA; dsDNA binds to the exterior of the filament while single-stranded (ss)DNA is stabiized in the filament's interior. The ATP-DnaA-oriC complex binds and stabilizes one strand of the AT-rich DNA unwinding element (DUE), permitting loading of DNA polymerase. After initiation quickly degrades to an ADP-DnaA complex that is not apt for DNA replication. Binds acidic phospholipids. In Streptomyces reticuli, this protein is Chromosomal replication initiator protein DnaA.